We begin with the raw amino-acid sequence, 52 residues long: Conotoxin Cal6.3b (52 aa).

A propeptide spanning residues Lys-1–Arg-4 is cleaved from the precursor. Cystine bridges form between Cys-12–Cys-23, Cys-15–Cys-27, and Cys-22–Cys-30. Gln-50 bears the Glutamine amide mark.

In terms of tissue distribution, expressed by the venom duct.

It is found in the secreted. In terms of biological role, probable neurotoxin with unknown target. Possibly targets ion channels. The protein is Conotoxin Cal6.3b of Californiconus californicus (California cone).